We begin with the raw amino-acid sequence, 3955 residues long: Nonribosomal peptide synthetase fmqA (3955 aa).

An adenylation 1 region spans residues 293–691 (SYSELETLSL…AQACCTIRNV (399 aa)). The Carrier 1 domain occupies 806–879 (THKETLIHQL…DLARLTDVVN (74 aa)). Ser840 carries the O-(pantetheine 4'-phosphoryl)serine modification. A condensation 1 region spans residues 916–1187 (QDIYPCTPLQ…IATVPLRVRL (272 aa)). Residues 1371–1766 (TYAELGELSD…DEVEKHVYQC (396 aa)) form an adenylation 2 region. The 77-residue stretch at 1880–1956 (EPTSVAEREM…KIMSHESSLS (77 aa)) folds into the Carrier 2 domain. Ser1917 is subject to O-(pantetheine 4'-phosphoryl)serine. Residues 1970-2261 (FALSPIQQMF…FTTMWPVVAE (292 aa)) are epimerase. The interval 2438 to 2724 (EDIYPCSPSQ…FNPLPCRVHL (287 aa)) is condensation 2. Residues 2906–3299 (TYGQLDELSS…GEVEANVQHC (394 aa)) form an adenylation 3 region. The 77-residue stretch at 3422–3498 (APSTEEEKKL…DLAKVAVPKS (77 aa)) folds into the Carrier 3 domain. Ser3459 bears the O-(pantetheine 4'-phosphoryl)serine mark. The interval 3541–3805 (PGTQAQQFFI…CLNFIPLRVM (265 aa)) is condensation 3.

Belongs to the NRP synthetase family. As to quaternary structure, interacts with the mitogen-activated protein kinase mpkA.

Its subcellular location is the cytoplasmic vesicle. It participates in alkaloid biosynthesis. Functionally, nonribosomal peptide synthetase; part of the gene cluster that mediates the biosynthesis of the antitumor fumiquinazolines that confer a dual-usage capability to defend against phagocytes in the environment and animal hosts. The simplest member is fumiquinazoline F (FQF) with a 6-6-6 tricyclic core derived from anthranilic acid (Ant), tryptophan (Trp), and alanine (Ala). The trimodular NRPS fmqA is responsible for FQF formation. Modules 1, 2 and 3 of fmqA are predicted to activate and load Ant, Trp and Ala, respectively, providing for the assembly of an Ant-Trp-Ala-S-enzyme intermediate that would undergo double cyclization for chain release and generation of the tricyclic 6-6-6 product fumiquinazoline F. The presence of an E domain predicted for module 2 of fmqA is consistent with epimerization of L-Trp to D-Trp during assembly to generate the R-stereocenter at C14 of FQF. The FAD-dependent monooxygenase fmqB and the monomodular NRPS fmqC then maturate FQF to FQA. FmqB oxidizes the 2',3'-double bond of the indole side chain of FQF, and fmqC activates L-Ala as the adenylate, installs it as the pantetheinyl thioester on its carrier protein domain, and acylates the oxidized indole for subsequent intramolecular cyclization to create the 6-5-5-imidazolindolone of FQA. The FAD-linked oxidoreductase fmqD introduces a third layer of scaffold complexity by converting FQA to the spirohemiaminal FQC, presumably by catalyzing the formation of a transient imine within the pyrazinone ring. FQC subsequently converts nonenzymatically to the known cyclic aminal FQD. The sequence is that of Nonribosomal peptide synthetase fmqA from Aspergillus fumigatus (strain ATCC MYA-4609 / CBS 101355 / FGSC A1100 / Af293) (Neosartorya fumigata).